The primary structure comprises 93 residues: MRLFILVLTLLFGWLQYTLWFGKNGVSDYYTIESDIEAQQLVNTKLQARNSEMYAEIDDLKQGLDAIEERARHELGMLKEGETFYRIVGEENQ.

Residues 1 to 3 (MRL) are Cytoplasmic-facing. A helical membrane pass occupies residues 4 to 21 (FILVLTLLFGWLQYTLWF). Topologically, residues 22–93 (GKNGVSDYYT…FYRIVGEENQ (72 aa)) are periplasmic. Residues 42 to 75 (VNTKLQARNSEMYAEIDDLKQGLDAIEERARHEL) are a coiled coil.

This sequence belongs to the FtsB family. Part of a complex composed of FtsB, FtsL and FtsQ.

The protein localises to the cell inner membrane. Essential cell division protein. May link together the upstream cell division proteins, which are predominantly cytoplasmic, with the downstream cell division proteins, which are predominantly periplasmic. In Vibrio vulnificus (strain YJ016), this protein is Cell division protein FtsB.